Here is an 856-residue protein sequence, read N- to C-terminus: Dynein regulatory complex subunit 7 (856 aa).

The span at 1-11 shows a compositional bias: basic and acidic residues; sequence MEYLEDNKTET. Disordered regions lie at residues 1 to 30 and 255 to 277; these read MEYL…SDEV and KMEE…AEKP. Residues 12-30 show a composition bias toward acidic residues; that stretch reads FEEEDKEREEDQVLDSDEV. 3 coiled-coil regions span residues 245 to 276, 661 to 733, and 764 to 790; these read AVQQ…DAEK, LQQA…ELDY, and KQRL…KKQQ.

This sequence belongs to the DRC7 family. Component of the nexin-dynein regulatory complex (N-DRC).

The protein localises to the cell projection. Its subcellular location is the cilium. It is found in the flagellum. The protein resides in the cytoplasm. It localises to the cytoskeleton. The protein localises to the cilium axoneme. Its subcellular location is the flagellum axoneme. Functionally, component of the nexin-dynein regulatory complex (N-DRC) a key regulator of ciliary/flagellar motility which maintains the alignment and integrity of the distal axoneme and regulates microtubule sliding in motile axonemes. Involved in the regulation of flagellar motility. Essential for male fertility, sperm head morphogenesis and sperm flagellum formation. The polypeptide is Dynein regulatory complex subunit 7 (drc7) (Xenopus tropicalis (Western clawed frog)).